The following is a 31-amino-acid chain: Cytochrome b6-f complex subunit 6 (31 aa).

Residues 4-24 (LLSYFGLLLAALISTLVLFIG) form a helical membrane-spanning segment.

The protein belongs to the PetL family. In terms of assembly, the 4 large subunits of the cytochrome b6-f complex are cytochrome b6, subunit IV (17 kDa polypeptide, PetD), cytochrome f and the Rieske protein, while the 4 small subunits are PetG, PetL, PetM and PetN. The complex functions as a dimer.

It is found in the plastid. It localises to the chloroplast thylakoid membrane. In terms of biological role, component of the cytochrome b6-f complex, which mediates electron transfer between photosystem II (PSII) and photosystem I (PSI), cyclic electron flow around PSI, and state transitions. PetL is important for photoautotrophic growth as well as for electron transfer efficiency and stability of the cytochrome b6-f complex. The chain is Cytochrome b6-f complex subunit 6 from Psilotum nudum (Whisk fern).